The chain runs to 101 residues: Ubiquitin-related modifier 1 homolog (101 aa).

At G101 the chain carries 1-thioglycine. Residue G101 forms a Glycyl lysine isopeptide (Gly-Lys) (interchain with K-? in acceptor proteins) linkage.

The protein belongs to the URM1 family. Interacts with cer. In terms of processing, C-terminal thiocarboxylation occurs in 2 steps, it is first acyl-adenylated (-COAMP) via the hesA/moeB/thiF part of the MOCS3 homolog, then thiocarboxylated (-COSH) via the rhodanese domain of the MOCS3 homolog.

It is found in the cytoplasm. Its pathway is tRNA modification; 5-methoxycarbonylmethyl-2-thiouridine-tRNA biosynthesis. Its function is as follows. Acts as a sulfur carrier required for 2-thiolation of mcm(5)S(2)U at tRNA wobble positions of cytosolic tRNA(Lys), tRNA(Glu) and tRNA(Gln). Serves as sulfur donor in tRNA 2-thiolation reaction by being thiocarboxylated (-COSH) at its C-terminus by MOCS3. The sulfur is then transferred to tRNA to form 2-thiolation of mcm(5)S(2)U. Also acts as a ubiquitin-like protein (UBL) that is covalently conjugated via an isopeptide bond to lysine residues of target proteins such as Prx2/Jafrac1, Ciao1, Eip71CD and GILT1. The thiocarboxylated form serves as substrate for conjugation and oxidative stress specifically induces the formation of UBL-protein conjugates. The chain is Ubiquitin-related modifier 1 homolog from Drosophila sechellia (Fruit fly).